Here is a 315-residue protein sequence, read N- to C-terminus: Ribosomal large subunit pseudouridine synthase D (315 aa).

Residues 18–87 (KRLDQILSKL…LPQNIALNTI (70 aa)) enclose the S4 RNA-binding domain. Residue D139 is part of the active site.

This sequence belongs to the pseudouridine synthase RluA family.

The protein resides in the cytoplasm. It carries out the reaction uridine(1911/1915/1917) in 23S rRNA = pseudouridine(1911/1915/1917) in 23S rRNA. Functionally, responsible for synthesis of pseudouridine from uracil at positions 1911, 1915 and 1917 in 23S ribosomal RNA. This Buchnera aphidicola subsp. Schizaphis graminum (strain Sg) protein is Ribosomal large subunit pseudouridine synthase D (rluD).